A 343-amino-acid chain; its full sequence is 4-hydroxy-2-oxovalerate aldolase 2 (343 aa).

Residues 8-260 (ITVHDMSLRD…ETGVDVFAIS (253 aa)) form the Pyruvate carboxyltransferase domain. Residue 16–17 (RD) participates in substrate binding. Mn(2+) is bound at residue aspartate 17. Histidine 20 acts as the Proton acceptor in catalysis. Residues serine 170 and histidine 199 each contribute to the substrate site. Mn(2+)-binding residues include histidine 199 and histidine 201. Tyrosine 290 contacts substrate.

It belongs to the 4-hydroxy-2-oxovalerate aldolase family.

It carries out the reaction (S)-4-hydroxy-2-oxopentanoate = acetaldehyde + pyruvate. The polypeptide is 4-hydroxy-2-oxovalerate aldolase 2 (Burkholderia lata (strain ATCC 17760 / DSM 23089 / LMG 22485 / NCIMB 9086 / R18194 / 383)).